The primary structure comprises 248 residues: Ribonuclease HII (248 aa).

Positions 29–219 (DIVCGVDEAG…VREAHLRLGT (191 aa)) constitute an RNase H type-2 domain. Residues D35, E36, and D128 each contribute to the a divalent metal cation site.

It belongs to the RNase HII family. Requires Mn(2+) as cofactor. Mg(2+) serves as cofactor.

The protein localises to the cytoplasm. It catalyses the reaction Endonucleolytic cleavage to 5'-phosphomonoester.. Endonuclease that specifically degrades the RNA of RNA-DNA hybrids. The chain is Ribonuclease HII from Paraburkholderia xenovorans (strain LB400).